Here is a 323-residue protein sequence, read N- to C-terminus: MQAAWLLGALVVPQLLGFGHGARGAEREWEGGWGGAQEEEREREALMLKHLQEALGLPAGRGDENPAGTVEGKEDWEMEEDQGEEEEEEATPTPSSGPSPSPTPEDIVTYILGRLAGLDAGLHQLHVRLHALDTRVVELTQGLRQLRNAAGDTRDAVQALQEAQGRAEREHGRLEGCLKGLRLGHKCFLLSRDFEAQAAAQARCTARGGSLAQPADRQQMEALTRYLRAALAPYNWPVWLGVHDRRAEGLYLFENGQRVSFFAWHRSPRPELGAQPSASPHPLSPDQPNGGTLENCVAQASDDGSWWDHDCQRRLYYVCEFPF.

The N-terminal stretch at M1–G21 is a signal peptide. Disordered stretches follow at residues L55–D106 and L272–N295. The Cell attachment site motif lies at R61–D63. The span at E74–A90 shows a compositional bias: acidic residues. Residues L183–E320 form the C-type lectin domain. 2 cysteine pairs are disulfide-bonded: C204-C319 and C296-C311.

Post-translationally, O-glycosylated. Probably sulfated on the O-glycans. As to expression, expressed in skeletal tissues including bone marrow, chondrocytes, primary ossification center-associated cells, the perichondrium and periosteum. Lower levels of expression were detected in spleen, thymus, appendix and fetal liver.

It localises to the cytoplasm. Its subcellular location is the secreted. Functionally, promotes osteogenesis by stimulating the differentiation of mesenchymal progenitors into mature osteoblasts. Important for repair and maintenance of adult bone. This is C-type lectin domain family 11 member A (CLEC11A) from Homo sapiens (Human).